The sequence spans 735 residues: Phosphoribosylformylglycinamidine synthase subunit PurL (735 aa).

The active site involves histidine 49. Residues tyrosine 52 and lysine 91 each contribute to the ATP site. Glutamate 93 provides a ligand contact to Mg(2+). Residues 94–97 and arginine 116 each bind substrate; that span reads SHNH. Residue histidine 95 is the Proton acceptor of the active site. Aspartate 117 is a binding site for Mg(2+). A substrate-binding site is contributed by glutamine 240. Aspartate 268 serves as a coordination point for Mg(2+). 312-314 provides a ligand contact to substrate; it reads ESQ. ATP contacts are provided by aspartate 493 and glycine 530. Asparagine 531 serves as a coordination point for Mg(2+). Serine 533 provides a ligand contact to substrate.

Belongs to the FGAMS family. As to quaternary structure, monomer. Part of the FGAM synthase complex composed of 1 PurL, 1 PurQ and 2 PurS subunits.

It is found in the cytoplasm. It catalyses the reaction N(2)-formyl-N(1)-(5-phospho-beta-D-ribosyl)glycinamide + L-glutamine + ATP + H2O = 2-formamido-N(1)-(5-O-phospho-beta-D-ribosyl)acetamidine + L-glutamate + ADP + phosphate + H(+). It functions in the pathway purine metabolism; IMP biosynthesis via de novo pathway; 5-amino-1-(5-phospho-D-ribosyl)imidazole from N(2)-formyl-N(1)-(5-phospho-D-ribosyl)glycinamide: step 1/2. Its function is as follows. Part of the phosphoribosylformylglycinamidine synthase complex involved in the purines biosynthetic pathway. Catalyzes the ATP-dependent conversion of formylglycinamide ribonucleotide (FGAR) and glutamine to yield formylglycinamidine ribonucleotide (FGAM) and glutamate. The FGAM synthase complex is composed of three subunits. PurQ produces an ammonia molecule by converting glutamine to glutamate. PurL transfers the ammonia molecule to FGAR to form FGAM in an ATP-dependent manner. PurS interacts with PurQ and PurL and is thought to assist in the transfer of the ammonia molecule from PurQ to PurL. This Azorhizobium caulinodans (strain ATCC 43989 / DSM 5975 / JCM 20966 / LMG 6465 / NBRC 14845 / NCIMB 13405 / ORS 571) protein is Phosphoribosylformylglycinamidine synthase subunit PurL.